Consider the following 2752-residue polypeptide: Serine/arginine repetitive matrix protein 2 (2752 aa).

Methionine 1 carries the post-translational modification N-acetylmethionine. The stretch at 60–92 forms a coiled coil; sequence HERKRRVELRCLELEEMMEEQGYEEQQIQEKVA. Lysine 101 is subject to N6-acetyllysine. Residues lysine 108 and lysine 130 each participate in a glycyl lysine isopeptide (Lys-Gly) (interchain with G-Cter in SUMO2) cross-link. The segment at 141–2131 is disordered; it reads ISDSYVDGSS…MSPTPLDRCR (1991 aa). A Phosphotyrosine modification is found at tyrosine 145. Lysine 169 is modified (N6-acetyllysine). Residues 175-185 show a composition bias toward low complexity; sequence RESSSSRSPTP. Basic residues-rich tracts occupy residues 186–197 and 207–249; these read KQKKKKKKKDRG and RERK…KRSR. The sufficient for RNA-binding stretch occupies residues 197–259; sequence GRRSESSSPR…STTPAPKSRR (63 aa). Phosphoserine is present on residues serine 220 and serine 222. The span at 263 to 290 shows a compositional bias: low complexity; the sequence is STSADSASSSDTSRSRSRSAAAKTHTTA. Threonine 286 carries the post-translational modification Phosphothreonine. Serine 295, serine 297, serine 300, serine 322, and serine 323 each carry phosphoserine. Positions 313 to 333 are enriched in polar residues; that stretch reads PGTTSTQRPSSPETATKQPSS. The segment covering 335–347 has biased composition (basic and acidic residues); the sequence is YEDKDKDKKEKSA. Over residues 348–360 the composition is skewed to low complexity; that stretch reads TRPSPSPERSSTG. Phosphoserine occurs at positions 351, 353, 357, and 358. Phosphothreonine is present on residues threonine 359 and threonine 367. Serine 377 is subject to Phosphoserine. The segment covering 380–398 has biased composition (polar residues); it reads PLATTPLSQEPVNPPSEAS. Phosphothreonine occurs at positions 383 and 384. Phosphoserine occurs at positions 387, 395, 398, 404, and 408. Over residues 399-410 the composition is skewed to basic and acidic residues; it reads PTRDRSPPKSPE. Over residues 411–421 the composition is skewed to low complexity; that stretch reads KLPQSSSSESS. 6 positions are modified to phosphoserine: serine 424, serine 435, serine 436, serine 437, serine 440, and serine 454. The segment covering 461 to 483 has biased composition (basic residues); it reads NRSHGRAKRDKSHSHTPSRRMGR. Phosphoserine is present on residues serine 484, serine 486, serine 506, serine 508, serine 510, serine 534, serine 536, and serine 543. The span at 491–536 shows a compositional bias: basic residues; that stretch reads KRGRSRSRTPTKRGHSRSRSPQWRRSRSAQRWGRSRSPQRRGRSRS. Low complexity predominate over residues 537 to 546; that stretch reads PQRPGWSRSR. 3 stretches are compositionally biased toward basic residues: residues 547–564, 571–723, and 732–742; these read NTQR…RSHS, GRSR…RRGR, and NKSRTSQRRSR. Serine 702, serine 704, and serine 706 each carry phosphoserine. Serine 778, serine 780, and serine 783 each carry phosphoserine. Low complexity predominate over residues 790 to 805; it reads SQTPPRRSRSGSSQPK. Basic residues predominate over residues 806–816; the sequence is AKSRTPPRRSR. A compositionally biased stretch (low complexity) spans 828–841; that stretch reads KTPSRQSHSSSSPH. 2 positions are modified to phosphoserine: serine 846 and serine 854. Residues 849–869 are compositionally biased toward polar residues; that stretch reads PPRQGSITSPQANEQSVTPQR. Threonine 856 is subject to Phosphothreonine. Serine 857 and serine 864 each carry phosphoserine. Phosphothreonine is present on threonine 866. Phosphoserine occurs at positions 871, 875, 876, 908, 935, 950, 952, 954, 957, 968, 970, 972, 973, and 974. Composition is skewed to low complexity over residues 901–917 and 924–945; these read SSTP…SPQP and SPRQ…TSRT. Residues threonine 977 and threonine 983 each carry the phosphothreonine modification. Serine 992 and serine 994 each carry phosphoserine. Residue tyrosine 996 is modified to Phosphotyrosine. Threonine 1003 is subject to Phosphothreonine. Over residues 1008-1017 the composition is skewed to low complexity; it reads SLSGSKSPCP. A phosphoserine mark is found at serine 1010, serine 1014, serine 1024, serine 1028, serine 1032, and serine 1042. The span at 1040-1064 shows a compositional bias: polar residues; sequence KSSTPPGESYFGVSSLQLKGQSQTS. Residue threonine 1043 is modified to Phosphothreonine. Tyrosine 1049 bears the Phosphotyrosine mark. Serine 1064, serine 1069, serine 1072, serine 1073, serine 1083, serine 1099, serine 1101, serine 1102, and serine 1103 each carry phosphoserine. Residues 1071-1092 show a composition bias toward polar residues; sequence TSSPEVRQSHSESPSLQSKSQT. The segment covering 1093–1104 has biased composition (low complexity); the sequence is SPKGGRSRSSSP. Threonine 1106 carries the phosphothreonine modification. Phosphoserine is present on residues serine 1112, serine 1122, serine 1124, serine 1129, serine 1132, serine 1152, serine 1179, serine 1188, and serine 1198. Residues 1132–1159 are compositionally biased toward polar residues; the sequence is SPEQSRFQSDSSSYPTVDSNSLLGQSRL. Residues 1204–1214 show a composition bias toward basic and acidic residues; sequence DTLRTPPRERS. The residue at position 1208 (threonine 1208) is a Phosphothreonine. Phosphoserine occurs at positions 1214, 1219, 1227, 1254, 1257, 1258, 1266, 1270, and 1271. The segment covering 1216 to 1233 has biased composition (polar residues); the sequence is AGSSPETKEQNSALPTSS. The segment covering 1283–1292 has biased composition (polar residues); it reads TLDQSQSQAS. A phosphoserine mark is found at serine 1311, serine 1318, serine 1320, serine 1326, serine 1329, serine 1336, serine 1348, serine 1368, serine 1382, serine 1383, serine 1384, serine 1387, serine 1401, serine 1403, and serine 1404. Polar residues predominate over residues 1318–1328; the sequence is SNSPLRENSFG. Over residues 1376–1386 the composition is skewed to polar residues; the sequence is TRSSGHSSSEL. Position 1413 is a phosphothreonine (threonine 1413). A phosphoserine mark is found at serine 1415, serine 1421, serine 1423, and serine 1424. A Phosphothreonine modification is found at threonine 1434. A compositionally biased stretch (low complexity) spans 1441–1452; that stretch reads SGSSPGLRDGSG. Serine 1444 and serine 1451 each carry phosphoserine. Threonine 1453 carries the post-translational modification Phosphothreonine. Positions 1453–1463 are enriched in polar residues; it reads TPSRHSLSGSS. Residues serine 1458, serine 1460, serine 1462, and serine 1463 each carry the phosphoserine modification. Threonine 1472 carries the phosphothreonine modification. Phosphoserine occurs at positions 1482 and 1483. Residue threonine 1492 is modified to Phosphothreonine. Phosphoserine occurs at positions 1497, 1499, 1501, and 1502. The residue at position 1511 (threonine 1511) is a Phosphothreonine. Residues serine 1517, serine 1519, serine 1521, and serine 1522 each carry the phosphoserine modification. The residue at position 1531 (threonine 1531) is a Phosphothreonine. Over residues 1534 to 1544 the composition is skewed to polar residues; it reads GQRSRSGSSQE. A phosphoserine mark is found at serine 1537, serine 1539, serine 1541, serine 1542, and serine 1552. Basic and acidic residues predominate over residues 1555-1567; the sequence is ERSESDSSPDSKA. Basic residues predominate over residues 1568-1577; sequence KTRTPLRQRS. Phosphoserine is present on residues serine 1577, serine 1579, serine 1581, serine 1582, serine 1598, serine 1600, serine 1601, serine 1616, serine 1620, serine 1621, serine 1648, serine 1658, serine 1691, serine 1693, and serine 1694. Positions 1638-1657 are enriched in low complexity; that stretch reads SGSSSKGRGPSPEGSSSTES. Basic residues predominate over residues 1681–1691; the sequence is KSRTPPRRRSS. Threonine 1698 carries the post-translational modification Phosphothreonine. Phosphoserine is present on residues serine 1727, serine 1729, serine 1731, serine 1732, serine 1762, and serine 1764. Composition is skewed to basic residues over residues 1769-1789 and 1798-1816; these read GLQR…RRRD and SRRR…RRRG. A phosphoserine mark is found at serine 1818, serine 1822, serine 1854, serine 1857, serine 1876, and serine 1878. Residues 1834–1854 show a composition bias toward basic residues; it reads SSRRRRGRSRTPPTSRKRSRS. The segment covering 1862–2068 has biased composition (basic residues); that stretch reads KRSRSRASPA…PRTARGKRSL (207 aa). Threonine 1880 bears the Phosphothreonine mark. Residues serine 1884 and serine 1890 each carry the phosphoserine modification. Phosphothreonine is present on threonine 1892. 5 positions are modified to phosphoserine: serine 1893, serine 1916, serine 1919, serine 1923, and serine 1925. A phosphothreonine mark is found at threonine 1927 and threonine 1931. Phosphoserine is present on residues serine 1946 and serine 1948. Threonine 1950 and threonine 1954 each carry phosphothreonine. Phosphoserine is present on residues serine 1958 and serine 1960. Residues threonine 1962 and threonine 1966 each carry the phosphothreonine modification. Serine 1970, serine 1972, and serine 1975 each carry phosphoserine. Position 1978 is a phosphothreonine (threonine 1978). Serine 1984, serine 1987, serine 1996, serine 1999, serine 2008, serine 2011, serine 2018, and serine 2020 each carry phosphoserine. Residue threonine 2022 is modified to Phosphothreonine. Phosphoserine occurs at positions 2030 and 2032. A Phosphothreonine modification is found at threonine 2034. Serine 2042, serine 2044, serine 2046, and serine 2067 each carry phosphoserine. Phosphothreonine is present on threonine 2069. Residues 2070–2095 show a composition bias toward low complexity; it reads RSPPAIRRRSASGSSSDRSRSATPPA. Phosphoserine occurs at positions 2071 and 2090. Threonine 2092 carries the post-translational modification Phosphothreonine. Positions 2097 to 2124 are enriched in polar residues; that stretch reads RNHSGSRTPPVALNSSRMSCFSRPSMSP. Serine 2100 and serine 2102 each carry phosphoserine. At threonine 2104 the chain carries Phosphothreonine. Phosphoserine occurs at positions 2118, 2121, 2123, and 2132. At threonine 2144 the chain carries Phosphothreonine. An omega-N-methylarginine mark is found at arginine 2194, arginine 2207, arginine 2231, and arginine 2246. A Phosphoserine modification is found at serine 2272. Omega-N-methylarginine is present on residues arginine 2274 and arginine 2288. 3 positions are modified to phosphothreonine: threonine 2289, threonine 2291, and threonine 2302. Serine 2310 bears the Phosphoserine mark. A disordered region spans residues 2311–2342; that stretch reads LTGSGTPPTAANYPSSSRTPQAPASANLVGPR. A phosphothreonine mark is found at threonine 2316 and threonine 2329. Over residues 2317 to 2334 the composition is skewed to polar residues; it reads PPTAANYPSSSRTPQAPA. At serine 2335 the chain carries Phosphoserine. Arginine 2342 bears the Omega-N-methylarginine mark. Serine 2343, serine 2368, and serine 2376 each carry phosphoserine. Threonine 2381 carries the phosphothreonine modification. Serine 2382 is modified (phosphoserine). An Asymmetric dimethylarginine; alternate modification is found at arginine 2384. Residue arginine 2384 is modified to Omega-N-methylarginine; alternate. The interval 2389–2752 is disordered; the sequence is AYERVSGRTS…PMRHRSSRSP (364 aa). Phosphoserine occurs at positions 2394, 2398, and 2407. Threonine 2409 carries the post-translational modification Phosphothreonine. A phosphoserine mark is found at serine 2412, serine 2415, serine 2426, serine 2429, serine 2449, and serine 2453. Polar residues predominate over residues 2426-2439; that stretch reads SPSSRMGQAPSQSL. Residues 2455–2473 show a composition bias toward polar residues; that stretch reads FSDQSRCLIAQTTPVAGSQ. Composition is skewed to low complexity over residues 2474–2487, 2515–2526, and 2533–2567; these read SLSS…TSSA, AQQPSALAALQP, and SSSS…EGSS. Serine 2581 bears the Phosphoserine mark. Threonine 2583 carries the phosphothreonine modification. Lysine 2587 is covalently cross-linked (Glycyl lysine isopeptide (Lys-Gly) (interchain with G-Cter in SUMO2)). Threonine 2599 carries the phosphothreonine modification. Positions 2608-2648 are enriched in low complexity; the sequence is SSSSSSSSSSSSSSSSSSSSSSSSSSSSSSSSSSSSSSSSS. The segment covering 2651-2668 has biased composition (pro residues); it reads PAKPGPQALPKPASPKKP. 10 positions are modified to phosphoserine: serine 2664, serine 2675, serine 2677, serine 2684, serine 2688, serine 2690, serine 2692, serine 2694, serine 2702, and serine 2706. Positions 2669-2689 are enriched in basic and acidic residues; it reads PPGERRSRSPRKPIDSLRDSR. The segment covering 2707 to 2716 has biased composition (low complexity); that stretch reads PRDQQSSSSE. Residues 2717–2729 show a composition bias toward basic and acidic residues; sequence RGSRRGQRGDSRS. Phosphothreonine is present on threonine 2738. A Phosphoserine modification is found at serine 2740. Basic residues predominate over residues 2743–2752; it reads PMRHRSSRSP.

This sequence belongs to the CWC21 family. As to quaternary structure, component of pre-catalytic, catalytic and post-catalytic spliceosome complexes. Found in a pre-mRNA splicing complex with SFRS4, SFRS5, SNRP70, SNRPA1, SRRM1 and SRRM2. Component of the minor spliceosome, which splices U12-type introns. Interacts with DHX8. Interacts with CACTIN. As to expression, expressed in liver, placenta, and white blood cells.

Its subcellular location is the nucleus. It is found in the nucleus speckle. In terms of biological role, required for pre-mRNA splicing as component of the spliceosome. As a component of the minor spliceosome, involved in the splicing of U12-type introns in pre-mRNAs. The chain is Serine/arginine repetitive matrix protein 2 (SRRM2) from Homo sapiens (Human).